The primary structure comprises 30 residues: Fimbrial assembly protein, serogroup B1 (30 aa).

The polypeptide is Fimbrial assembly protein, serogroup B1 (fimB) (Dichelobacter nodosus (Bacteroides nodosus)).